The primary structure comprises 401 residues: 8-amino-7-oxononanoate synthase (401 aa).

Arg24 contacts substrate. Pyridoxal 5'-phosphate is bound at residue 111 to 112; it reads GF. His137 contributes to the substrate binding site. Residues Ser183, His211, and Thr240 each coordinate pyridoxal 5'-phosphate. Residue Lys243 is modified to N6-(pyridoxal phosphate)lysine. Thr357 is a substrate binding site.

The protein belongs to the class-II pyridoxal-phosphate-dependent aminotransferase family. BioF subfamily. In terms of assembly, homodimer. It depends on pyridoxal 5'-phosphate as a cofactor.

The enzyme catalyses 6-carboxyhexanoyl-[ACP] + L-alanine + H(+) = (8S)-8-amino-7-oxononanoate + holo-[ACP] + CO2. Its pathway is cofactor biosynthesis; biotin biosynthesis. Functionally, catalyzes the decarboxylative condensation of pimeloyl-[acyl-carrier protein] and L-alanine to produce 8-amino-7-oxononanoate (AON), [acyl-carrier protein], and carbon dioxide. The protein is 8-amino-7-oxononanoate synthase of Xanthomonas euvesicatoria pv. vesicatoria (strain 85-10) (Xanthomonas campestris pv. vesicatoria).